A 355-amino-acid polypeptide reads, in one-letter code: Uroporphyrinogen decarboxylase (355 aa).

Residues 27-31 (RQAGR), Asp77, Tyr154, Thr209, and His327 each bind substrate.

It belongs to the uroporphyrinogen decarboxylase family. As to quaternary structure, homodimer.

It localises to the cytoplasm. It carries out the reaction uroporphyrinogen III + 4 H(+) = coproporphyrinogen III + 4 CO2. It participates in porphyrin-containing compound metabolism; protoporphyrin-IX biosynthesis; coproporphyrinogen-III from 5-aminolevulinate: step 4/4. Catalyzes the decarboxylation of four acetate groups of uroporphyrinogen-III to yield coproporphyrinogen-III. This Pseudoalteromonas atlantica (strain T6c / ATCC BAA-1087) protein is Uroporphyrinogen decarboxylase.